Consider the following 202-residue polypeptide: Alcohol dehydrogenase-related 31 kDa protein (202 aa).

11 to 34 (YVADCGGIALETSKVLMTKNIAKL) lines the NAD(+) pocket. A substrate-binding site is contributed by Ser139. The active-site Proton acceptor is the Tyr152.

The protein belongs to the short-chain dehydrogenases/reductases (SDR) family.

This is Alcohol dehydrogenase-related 31 kDa protein (Adhr) from Drosophila erecta (Fruit fly).